The sequence spans 92 residues: Small ribosomal subunit protein uS19 (92 aa).

A disordered region spans residues 72–92 (GEFSPTRTYTGHGSDKKSKRG).

Belongs to the universal ribosomal protein uS19 family.

Functionally, protein S19 forms a complex with S13 that binds strongly to the 16S ribosomal RNA. This Gluconobacter oxydans (strain 621H) (Gluconobacter suboxydans) protein is Small ribosomal subunit protein uS19.